Here is a 141-residue protein sequence, read N- to C-terminus: NADH-quinone oxidoreductase subunit A (141 aa).

3 helical membrane-spanning segments follow: residues 24–44 (LLAL…LLLA), 77–97 (VPFY…AFIA), and 106–126 (LGWA…VALI).

This sequence belongs to the complex I subunit 3 family. As to quaternary structure, NDH-1 is composed of 14 different subunits. Subunits NuoA, H, J, K, L, M, N constitute the membrane sector of the complex.

It is found in the cell inner membrane. The catalysed reaction is a quinone + NADH + 5 H(+)(in) = a quinol + NAD(+) + 4 H(+)(out). In terms of biological role, NDH-1 shuttles electrons from NADH, via FMN and iron-sulfur (Fe-S) centers, to quinones in the respiratory chain. The immediate electron acceptor for the enzyme in this species is believed to be ubiquinone. Couples the redox reaction to proton translocation (for every two electrons transferred, four hydrogen ions are translocated across the cytoplasmic membrane), and thus conserves the redox energy in a proton gradient. This chain is NADH-quinone oxidoreductase subunit A, found in Syntrophotalea carbinolica (strain DSM 2380 / NBRC 103641 / GraBd1) (Pelobacter carbinolicus).